The chain runs to 283 residues: Bifunctional protein FolD (283 aa).

NADP(+) is bound by residues 166–168 (GAS), S191, and I232.

Belongs to the tetrahydrofolate dehydrogenase/cyclohydrolase family. As to quaternary structure, homodimer.

It carries out the reaction (6R)-5,10-methylene-5,6,7,8-tetrahydrofolate + NADP(+) = (6R)-5,10-methenyltetrahydrofolate + NADPH. It catalyses the reaction (6R)-5,10-methenyltetrahydrofolate + H2O = (6R)-10-formyltetrahydrofolate + H(+). The protein operates within one-carbon metabolism; tetrahydrofolate interconversion. Functionally, catalyzes the oxidation of 5,10-methylenetetrahydrofolate to 5,10-methenyltetrahydrofolate and then the hydrolysis of 5,10-methenyltetrahydrofolate to 10-formyltetrahydrofolate. The polypeptide is Bifunctional protein FolD (Chromobacterium violaceum (strain ATCC 12472 / DSM 30191 / JCM 1249 / CCUG 213 / NBRC 12614 / NCIMB 9131 / NCTC 9757 / MK)).